The following is a 273-amino-acid chain: Putative pyruvate, phosphate dikinase regulatory protein (273 aa).

Residue 153–160 (GVSRTSKT) participates in ADP binding.

This sequence belongs to the pyruvate, phosphate/water dikinase regulatory protein family. PDRP subfamily.

It carries out the reaction N(tele)-phospho-L-histidyl/L-threonyl-[pyruvate, phosphate dikinase] + ADP = N(tele)-phospho-L-histidyl/O-phospho-L-threonyl-[pyruvate, phosphate dikinase] + AMP + H(+). The catalysed reaction is N(tele)-phospho-L-histidyl/O-phospho-L-threonyl-[pyruvate, phosphate dikinase] + phosphate + H(+) = N(tele)-phospho-L-histidyl/L-threonyl-[pyruvate, phosphate dikinase] + diphosphate. Functionally, bifunctional serine/threonine kinase and phosphorylase involved in the regulation of the pyruvate, phosphate dikinase (PPDK) by catalyzing its phosphorylation/dephosphorylation. This chain is Putative pyruvate, phosphate dikinase regulatory protein, found in Sinorhizobium fredii (strain NBRC 101917 / NGR234).